A 454-amino-acid polypeptide reads, in one-letter code: Bifunctional protein GlmU (454 aa).

The interval 1–228 (MNKCAIILAA…FEETLGVNSR (228 aa)) is pyrophosphorylase. Residues 8–11 (LAAG), Lys22, Gln73, and 78–79 (GT) contribute to the UDP-N-acetyl-alpha-D-glucosamine site. A Mg(2+)-binding site is contributed by Asp103. Gly140, Glu154, Asn169, and Asn226 together coordinate UDP-N-acetyl-alpha-D-glucosamine. Asn226 serves as a coordination point for Mg(2+). The interval 229 to 249 (AELAKVESIMRNRINRTHLDN) is linker. Positions 250–454 (GVTIIDPLNT…EGWVERKKLK (205 aa)) are N-acetyltransferase. Positions 331 and 349 each coordinate UDP-N-acetyl-alpha-D-glucosamine. His361 serves as the catalytic Proton acceptor. The UDP-N-acetyl-alpha-D-glucosamine site is built by Tyr364 and Asn375. Acetyl-CoA-binding positions include 384 to 385 (NY), Ala421, and Arg438.

In the N-terminal section; belongs to the N-acetylglucosamine-1-phosphate uridyltransferase family. It in the C-terminal section; belongs to the transferase hexapeptide repeat family. As to quaternary structure, homotrimer. It depends on Mg(2+) as a cofactor.

The protein localises to the cytoplasm. It catalyses the reaction alpha-D-glucosamine 1-phosphate + acetyl-CoA = N-acetyl-alpha-D-glucosamine 1-phosphate + CoA + H(+). It carries out the reaction N-acetyl-alpha-D-glucosamine 1-phosphate + UTP + H(+) = UDP-N-acetyl-alpha-D-glucosamine + diphosphate. It functions in the pathway nucleotide-sugar biosynthesis; UDP-N-acetyl-alpha-D-glucosamine biosynthesis; N-acetyl-alpha-D-glucosamine 1-phosphate from alpha-D-glucosamine 6-phosphate (route II): step 2/2. The protein operates within nucleotide-sugar biosynthesis; UDP-N-acetyl-alpha-D-glucosamine biosynthesis; UDP-N-acetyl-alpha-D-glucosamine from N-acetyl-alpha-D-glucosamine 1-phosphate: step 1/1. Its pathway is bacterial outer membrane biogenesis; LPS lipid A biosynthesis. Catalyzes the last two sequential reactions in the de novo biosynthetic pathway for UDP-N-acetylglucosamine (UDP-GlcNAc). The C-terminal domain catalyzes the transfer of acetyl group from acetyl coenzyme A to glucosamine-1-phosphate (GlcN-1-P) to produce N-acetylglucosamine-1-phosphate (GlcNAc-1-P), which is converted into UDP-GlcNAc by the transfer of uridine 5-monophosphate (from uridine 5-triphosphate), a reaction catalyzed by the N-terminal domain. The chain is Bifunctional protein GlmU from Clostridium perfringens (strain ATCC 13124 / DSM 756 / JCM 1290 / NCIMB 6125 / NCTC 8237 / Type A).